Here is a 385-residue protein sequence, read N- to C-terminus: Cytochrome b (385 aa).

4 helical membrane-spanning segments follow: residues 32-52, 76-98, 113-133, and 179-199; these read LGSL…FMAM, WLLR…MHIA, VWIV…LGYC, and FFAL…MHFM. His-82 and His-96 together coordinate heme b. His-183 and His-197 together coordinate heme b. His-202 is a binding site for a ubiquinone. 4 helical membrane passes run 225 to 245, 289 to 309, 321 to 341, and 348 to 368; these read FIFK…LFVF, LLGV…PITD, LSKF…QIGQ, and FVLM…IIVP.

Belongs to the cytochrome b family. Fungal cytochrome b-c1 complex contains 10 subunits; 3 respiratory subunits, 2 core proteins and 5 low-molecular weight proteins. Cytochrome b-c1 complex is a homodimer. It depends on heme b as a cofactor.

It is found in the mitochondrion inner membrane. Component of the ubiquinol-cytochrome c reductase complex (complex III or cytochrome b-c1 complex) that is part of the mitochondrial respiratory chain. The b-c1 complex mediates electron transfer from ubiquinol to cytochrome c. Contributes to the generation of a proton gradient across the mitochondrial membrane that is then used for ATP synthesis. This chain is Cytochrome b (COB), found in Candida glabrata (strain ATCC 2001 / BCRC 20586 / JCM 3761 / NBRC 0622 / NRRL Y-65 / CBS 138) (Yeast).